The chain runs to 371 residues: Anhydro-N-acetylmuramic acid kinase (371 aa).

ATP is bound at residue 15 to 22 (GTSLDGVD).

Belongs to the anhydro-N-acetylmuramic acid kinase family.

The enzyme catalyses 1,6-anhydro-N-acetyl-beta-muramate + ATP + H2O = N-acetyl-D-muramate 6-phosphate + ADP + H(+). It functions in the pathway amino-sugar metabolism; 1,6-anhydro-N-acetylmuramate degradation. The protein operates within cell wall biogenesis; peptidoglycan recycling. In terms of biological role, catalyzes the specific phosphorylation of 1,6-anhydro-N-acetylmuramic acid (anhMurNAc) with the simultaneous cleavage of the 1,6-anhydro ring, generating MurNAc-6-P. Is required for the utilization of anhMurNAc either imported from the medium or derived from its own cell wall murein, and thus plays a role in cell wall recycling. This chain is Anhydro-N-acetylmuramic acid kinase, found in Cereibacter sphaeroides (strain ATCC 17023 / DSM 158 / JCM 6121 / CCUG 31486 / LMG 2827 / NBRC 12203 / NCIMB 8253 / ATH 2.4.1.) (Rhodobacter sphaeroides).